The sequence spans 309 residues: Tumor necrosis factor ligand superfamily member 9 (309 aa).

The segment covering 1-16 (MDQHTLDVEDTADARH) has biased composition (basic and acidic residues). The interval 1 to 20 (MDQHTLDVEDTADARHPAGT) is disordered. Over 1–82 (MDQHTLDVED…ALNFCSRHPK (82 aa)) the chain is Cytoplasmic. The chain crosses the membrane as a helical; Signal-anchor for type II membrane protein span at residues 83 to 103 (LYGLVALVLLLLIAACVPIFT). Residues 104–309 (RTEPRPALTI…FLVKPDNPWE (206 aa)) lie on the Extracellular side of the membrane. N-linked (GlcNAc...) asparagine glycosylation is found at Asn139, Asn161, and Asn293. The THD domain maps to 147-302 (VFAKLLAKNQ…NTTSFGLFLV (156 aa)).

This sequence belongs to the tumor necrosis factor family. Homotrimer.

It is found in the membrane. In terms of biological role, cytokine that binds to TNFRSF9. Induces the proliferation of activated peripheral blood T-cells. May have a role in activation-induced cell death (AICD). May play a role in cognate interactions between T-cells and B-cells/macrophages. This is Tumor necrosis factor ligand superfamily member 9 (Tnfsf9) from Mus musculus (Mouse).